The chain runs to 187 residues: Aspartic protease inhibitor 9 (187 aa).

N19 is a glycosylation site (N-linked (GlcNAc...) asparagine). Disulfide bonds link C48–C93 and C142–C158.

Belongs to the protease inhibitor I3 (leguminous Kunitz-type inhibitor) family. Glycosylated. In terms of tissue distribution, tubers.

It is found in the vacuole. In terms of biological role, inhibitor of cathepsin D (aspartic protease) and trypsin (serine protease). May protect the plant by inhibiting proteases of invading organisms. The chain is Aspartic protease inhibitor 9 from Solanum tuberosum (Potato).